The following is a 229-amino-acid chain: Peptide methionine sulfoxide reductase B3, chloroplastic (229 aa).

The transit peptide at Met1–Cys71 directs the protein to the chloroplast. One can recognise a MsrB domain in the interval Glu102–Ala223. Positions 141, 144, 187, and 190 each coordinate Zn(2+). Cys159 and Cys212 are joined by a disulfide. Cys212 serves as the catalytic Nucleophile.

This sequence belongs to the MsrB Met sulfoxide reductase family. Requires Zn(2+) as cofactor.

The protein localises to the plastid. It localises to the chloroplast. The catalysed reaction is L-methionyl-[protein] + [thioredoxin]-disulfide + H2O = L-methionyl-(R)-S-oxide-[protein] + [thioredoxin]-dithiol. Catalyzes the reduction of methionine sulfoxide (MetSO) to methionine in proteins. Plays a protective role against oxidative stress by restoring activity to proteins that have been inactivated by methionine oxidation. MSRB family specifically reduces the MetSO R-enantiomer. The chain is Peptide methionine sulfoxide reductase B3, chloroplastic (MSRB3) from Oryza sativa subsp. japonica (Rice).